The primary structure comprises 741 residues: Pentatricopeptide repeat-containing protein At1g08070, chloroplastic (741 aa).

13 PPR repeats span residues Asn98–Pro132, Asn133–Leu167, Asp168–Ser202, Tyr203–Lys229, Asp230–Pro264, Asp265–Ser299, Asn300–Lys330, Asp331–Pro365, Asn366–Arg396, Ala403–Lys433, Ser434–Pro468, Asp469–Asp499, and Lys505–Glu535. The tract at residues Ile540 to Asp615 is type E motif. A type E(+) motif region spans residues Ser616 to Glu646. Residues Lys647–Trp741 are type DYW motif.

The protein belongs to the PPR family. PCMP-H subfamily. In terms of assembly, interacts with ORRM1. Interacts with VAR3/OZ1.

It is found in the plastid. The protein localises to the chloroplast. Functionally, involved in multiple sites RNA editing events in chloroplasts. Involved in the editing of the site 9 of ndhB (ndhB-9) and site 1 of ndhG (ndhG-1) transcripts, which are two plastid-encoded subunits of the chloroplast NAD(P)H dehydrogenase (NDH) complex. Not essential for the activity of the NDH complex of the photosynthetic electron transport chain. The sequence is that of Pentatricopeptide repeat-containing protein At1g08070, chloroplastic (PCMP-H12) from Arabidopsis thaliana (Mouse-ear cress).